Consider the following 236-residue polypeptide: Small ribosomal subunit protein uS2c (236 aa).

It belongs to the universal ribosomal protein uS2 family.

It localises to the plastid. It is found in the chloroplast. This chain is Small ribosomal subunit protein uS2c (rps2), found in Lepidium virginicum (Virginia pepperweed).